Consider the following 616-residue polypeptide: MLLASAVVVWEWLNEHGRWRPYSPAVSHHIEAVVRAGPRAGGSVVLGQVDSRLAPYIIDLQSMNQFRQDTGTLRPVRRNYYDPSSAPGKGVVWEWENDNGSWTPYDMEVGITIQYAYEKQHPWIDLTSIGFSYIIDFSTMGQINRQTQRQRRVRRRLDLIYPMVTGTMPKTQSWPVSPGPATSSPAPPCSCPQCVLVMSVKAAVVHGGTGPPAVRKNMALSGVGKLPQPPGPGAKPLDTTGTIRGPGKTAPSQVIRRQVSNAPAGATVGSPASPQGSNRKTGRVALATLNRSNLQRLAIAQSRVLIASGVPTVPVKNLNGSSPVNPALAGITGILMSAAGLPVCLTRPPKLVLHPPPVSKSEIKSIPGVSNTSRKTTKKQAKKGKTPEEVLKKYLQKVRHPPEEDCTICMERLTAPSGYKGPQPTVKPDLVGKLSRCGHIYHIYCLVAMYNNGNKDGSLQCPTCKTIYGVKTGTQPPGKMEYHLIPHSLPGHPDCKTIRIIYSIPPGIQGPEHPNPGKSFSARGFPRHCYLPDSEKGRKVLKLLLVAWDRRLIFAIGTSSTTGESDTVIWNEVHHKTEFGSNLTGHGYPDANYLDNVLAELAAQGISEDSTSHEKD.

WWE domains are found at residues 1–78 (MLLA…PVRR) and 79–155 (NYYD…RVRR). 2 disordered regions span residues 223 to 254 (VGKLPQPPGPGAKPLDTTGTIRGPGKTAPSQV) and 355 to 387 (PPPVSKSEIKSIPGVSNTSRKTTKKQAKKGKTP). A compositionally biased stretch (basic residues) spans 375 to 384 (KTTKKQAKKG). The segment at 406–465 (CTICMERLTAPSGYKGPQPTVKPDLVGKLSRCGHIYHIYCLVAMYNNGNKDGSLQCPTCK) adopts an RING-type; atypical zinc-finger fold.

It belongs to the Deltex family. Interacts with NLRP4. Expressed in brain, testis, embryonic fibroblasts and thymocytes.

The protein localises to the cytoplasm. It carries out the reaction S-ubiquitinyl-[E2 ubiquitin-conjugating enzyme]-L-cysteine + [acceptor protein]-L-lysine = [E2 ubiquitin-conjugating enzyme]-L-cysteine + N(6)-ubiquitinyl-[acceptor protein]-L-lysine.. Its pathway is protein modification; protein ubiquitination. In terms of biological role, functions as a ubiquitin ligase protein in vivo, mediating 'Lys48'-linked polyubiquitination and promoting degradation of TBK1, targeting to TBK1 requires interaction with NLRP4. Regulator of Notch signaling, a signaling pathway involved in cell-cell communications that regulates a broad spectrum of cell-fate determinations. In Mus musculus (Mouse), this protein is E3 ubiquitin-protein ligase DTX4 (Dtx4).